Here is a 429-residue protein sequence, read N- to C-terminus: L-cysteine:1D-myo-inositol 2-amino-2-deoxy-alpha-D-glucopyranoside ligase (429 aa).

Cys-60 serves as a coordination point for Zn(2+). Residues 60 to 63 (CGIT), Thr-75, and 98 to 100 (NIT) contribute to the L-cysteinyl-5'-AMP site. The 'HIGH' region motif lies at 62-72 (ITPYDATHLGH). The short motif at 204-209 (ERGGDP) is the 'ERGGDP' region element. Trp-244 contributes to the L-cysteinyl-5'-AMP binding site. Cys-248 is a Zn(2+) binding site. L-cysteinyl-5'-AMP is bound at residue 266 to 268 (GSD). His-273 serves as a coordination point for Zn(2+). Ile-300 contacts L-cysteinyl-5'-AMP. Residues 306–310 (KMSKS) carry the 'KMSKS' region motif.

The protein belongs to the class-I aminoacyl-tRNA synthetase family. MshC subfamily. As to quaternary structure, monomer. The cofactor is Zn(2+).

It carries out the reaction 1D-myo-inositol 2-amino-2-deoxy-alpha-D-glucopyranoside + L-cysteine + ATP = 1D-myo-inositol 2-(L-cysteinylamino)-2-deoxy-alpha-D-glucopyranoside + AMP + diphosphate + H(+). Functionally, catalyzes the ATP-dependent condensation of GlcN-Ins and L-cysteine to form L-Cys-GlcN-Ins. This Mycolicibacterium vanbaalenii (strain DSM 7251 / JCM 13017 / BCRC 16820 / KCTC 9966 / NRRL B-24157 / PYR-1) (Mycobacterium vanbaalenii) protein is L-cysteine:1D-myo-inositol 2-amino-2-deoxy-alpha-D-glucopyranoside ligase.